The sequence spans 686 residues: WD repeat-containing protein 93 (686 aa).

Over residues 1 to 10 (MSFPRGSQTQ) the composition is skewed to polar residues. The segment at 1–40 (MSFPRGSQTQKIKHPIGTRKGPLEVPPPTEKDWPKDDEQD) is disordered. Basic and acidic residues predominate over residues 29–40 (TEKDWPKDDEQD). The WD repeat unit spans residues 410-449 (PCAAPIAVSQLSCSSSYLVLACEDGVLTLWDLAKGFPLGV).

In Homo sapiens (Human), this protein is WD repeat-containing protein 93 (WDR93).